The primary structure comprises 752 residues: Peptidyl-prolyl cis-trans isomerase G (752 aa).

The 166-residue stretch at 11–176 (FFDIAINNQP…AEVRILSCGE (166 aa)) folds into the PPIase cyclophilin-type domain. Over residues 182 to 193 (KVKKEEKKRHKS) the composition is skewed to basic residues. A disordered region spans residues 182 to 752 (KVKKEEKKRH…SPGTDEDKSG (571 aa)). A compositionally biased stretch (low complexity) spans 194-214 (SSSSSSSDSDSSSDSQSSSDS). The segment covering 226–251 (RKRKKKHRKNSRKHKKEKKKRKKSKK) has biased composition (basic residues). Residues serine 252, serine 254, serine 255, serine 257, and serine 288 each carry the phosphoserine modification. The segment covering 290 to 308 (PKADDKERKNREREREREC) has biased composition (basic and acidic residues). Serine 313 carries the post-translational modification Phosphoserine. A compositionally biased stretch (basic residues) spans 327–345 (FGRKIKGRGPRRYRTPSRS). Composition is skewed to basic and acidic residues over residues 346–366 (RSRDRFRRSETPPHWRQEMQR) and 377–447 (RWIK…DKYN). Position 354 is a phosphoserine (serine 354). Threonine 356 carries the post-translational modification Phosphothreonine. Residue serine 384 is modified to Phosphoserine. A Glycyl lysine isopeptide (Lys-Gly) (interchain with G-Cter in SUMO2) cross-link involves residue lysine 390. Serine 395, serine 411, and serine 413 each carry phosphoserine. Positions 448-461 (KNKVKKRGKSKSRS) are enriched in basic residues. Composition is skewed to basic and acidic residues over residues 462–552 (KSKE…DLTK) and 577–598 (RSHDRDRSRSKEYHRYREQEYR). Residues 599–625 (RRGRSRSRDRRTPGRSRSKDRRRRRRD) are compositionally biased toward basic residues. Basic and acidic residues predominate over residues 626-682 (SRSSEREESQSRNKEKYRSQDSKSSHRKENSEGEKRMYSKSRDHSSSNNNREKKADI). Residues serine 685 and serine 688 each carry the phosphoserine modification. Positions 685-705 (SPVSKTKQSSQDNEVKSSTLK) are enriched in polar residues. Lysine 691 participates in a covalent cross-link: Glycyl lysine isopeptide (Lys-Gly) (interchain with G-Cter in SUMO2). Serine 694, serine 742, and serine 743 each carry phosphoserine. The segment covering 706 to 752 (NQEDEKTRSPVEKENQKSKGQENDHVHDKNKKCDHESSPGTDEDKSG) has biased composition (basic and acidic residues). Threonine 746 is subject to Phosphothreonine. At serine 751 the chain carries Phosphoserine.

Interacts with CLK1, PNN and with the phosphorylated C-terminal domain of RNA polymerase II.

The protein resides in the nucleus matrix. It localises to the nucleus speckle. The catalysed reaction is [protein]-peptidylproline (omega=180) = [protein]-peptidylproline (omega=0). Inhibited by cyclosporin A (CsA). In terms of biological role, PPIase that catalyzes the cis-trans isomerization of proline imidic peptide bonds in oligopeptides and may therefore assist protein folding. May be implicated in the folding, transport, and assembly of proteins. May play an important role in the regulation of pre-mRNA splicing. The chain is Peptidyl-prolyl cis-trans isomerase G (Ppig) from Rattus norvegicus (Rat).